The chain runs to 123 residues: UPF0102 protein PputW619_0932 (123 aa).

It belongs to the UPF0102 family.

In Pseudomonas putida (strain W619), this protein is UPF0102 protein PputW619_0932.